The sequence spans 352 residues: Probable protein phosphatase 2C 42 (352 aa).

One can recognise a PPM-type phosphatase domain in the interval 26-321 (AYASSAMQGY…DNMSVILVRF (296 aa)). 4 residues coordinate Mn(2+): Asp62, Gly63, Asp267, and Asp312. Positions 328-352 (RGARAATSSTSTGTVPSRHSKSISL) are disordered. The segment covering 329 to 341 (GARAATSSTSTGT) has biased composition (low complexity).

Belongs to the PP2C family. It depends on Mg(2+) as a cofactor. Requires Mn(2+) as cofactor.

It carries out the reaction O-phospho-L-seryl-[protein] + H2O = L-seryl-[protein] + phosphate. The enzyme catalyses O-phospho-L-threonyl-[protein] + H2O = L-threonyl-[protein] + phosphate. This Oryza sativa subsp. japonica (Rice) protein is Probable protein phosphatase 2C 42.